The chain runs to 238 residues: 14-3-3 protein 2 (238 aa).

Belongs to the 14-3-3 family.

Functionally, probable adapter protein. In Entamoeba histolytica (strain ATCC 30459 / HM-1:IMSS / ABRM), this protein is 14-3-3 protein 2.